A 365-amino-acid chain; its full sequence is L-lactate oxidase (365 aa).

The FMN hydroxy acid dehydrogenase domain occupies 2–365 (TAISSPINLF…QDIDTSFLHL (364 aa)). Position 28 (Tyr28) interacts with pyruvate. Residues 81-83 (PMA), Ser110, and Gln135 each bind FMN. Tyr137 is a binding site for pyruvate. Residue Thr163 participates in FMN binding. Arg172 lines the pyruvate pocket. The FMN site is built by Lys239 and Ser261. Residues His263 and Arg266 each contribute to the pyruvate site. His263 functions as the Proton acceptor in the catalytic mechanism. FMN-binding positions include 294 to 298 (DGGIR) and Arg318.

It belongs to the FMN-dependent alpha-hydroxy acid dehydrogenase family. In terms of assembly, homotetramer. Requires FMN as cofactor.

The catalysed reaction is (S)-lactate + O2 = pyruvate + H2O2. It catalyses the reaction glyoxylate + O2 + H2O = oxalate + H2O2 + H(+). In terms of biological role, catalyzes the oxidation of (S)-lactate (L-lactate) to pyruvate, with a reduction of O2 to H2O2. In extant N2-fixing cyanobacteria such as Nostoc, this enzyme primarily serves as an O2-scavenging enzyme, protecting nitrogenase that is extremely sensitive to O2, and is therefore an essential partner in N2 fixation. Also shows clear oxidase activity with glyoxylate in vitro, and low activity with glycerate, hydroxypyruvate and glycolate. The very low glycolate oxidase activity indicates that this enzyme is unlikely to be involved in photorespiratory glycolate metabolism, a pathway that seems to exist in this cyanobacterium, but in which the oxidation of glycolate is taken over by glycolate dehydrogenase (GlcD). Is not able to use D-lactate as substrate and does not show any dehydrogenase activity with NAD(+) or NADP(+). This is L-lactate oxidase from Nostoc sp. (strain PCC 7120 / SAG 25.82 / UTEX 2576).